Here is a 64-residue protein sequence, read N- to C-terminus: VRDGYIAQPENCVYHCIPDCDTLCKDNGGTGGHCGFKLGHGIACWCNALPDNVGIIVDGVKCHK.

One can recognise an LCN-type CS-alpha/beta domain in the interval 2 to 63 (RDGYIAQPEN…GIIVDGVKCH (62 aa)). 4 disulfides stabilise this stretch: Cys12/Cys62, Cys16/Cys34, Cys20/Cys44, and Cys24/Cys46. Lys64 bears the Lysine amide mark.

Belongs to the long (4 C-C) scorpion toxin superfamily. Sodium channel inhibitor family. Alpha subfamily. Expressed by the venom gland.

It is found in the secreted. Functionally, alpha toxins bind voltage-independently at site-3 of sodium channels (Nav) and inhibit the inactivation of the activated channels, thereby blocking neuronal transmission. This toxin is highly toxic to insects and mice, and inhibits the binding of alpha-toxin to cockroach neuronal membranes. This Leiurus hebraeus (Hebrew deathstalker scorpion) protein is Alpha-like toxin Lqh6.